A 211-amino-acid polypeptide reads, in one-letter code: Arginine exporter protein ArgO (211 aa).

A run of 6 helical transmembrane segments spans residues Met-1–Pro-21, Ile-37–Gly-57, Leu-68–Phe-88, Ile-111–Val-131, Trp-147–Ala-167, and Ile-182–Gly-202.

Belongs to the LysE/ArgO transporter (TC 2.A.75) family.

The protein localises to the cell inner membrane. It catalyses the reaction L-arginine(in) = L-arginine(out). Involved in the export of arginine. Important to control the intracellular level of arginine and the correct balance between arginine and lysine. In Escherichia coli O157:H7, this protein is Arginine exporter protein ArgO.